The primary structure comprises 287 residues: Agamous-like MADS-box protein AGL53 (287 aa).

The MADS-box domain maps to 30–78; it reads STAKKTTNLSMREQTMFKKALELSTLCNIDVCVIYYGRDGKLIKTWPED. Positions 151-171 are disordered; the sequence is EFGQTRAVSSTTNPLSPPPSL.

In terms of assembly, interacts with MEE14/CBP1.

The protein localises to the nucleus. Functionally, probable transcription factor that may function in the maintenance of the proper function of the central cell in pollen tube attraction. This is Agamous-like MADS-box protein AGL53 from Arabidopsis thaliana (Mouse-ear cress).